Here is a 581-residue protein sequence, read N- to C-terminus: Kelch-like protein 30 (581 aa).

One can recognise a BTB domain in the interval 33-100; the sequence is ADVTLLVGDQ…VYTGRLTITQ (68 aa). The region spanning 135 to 237 is the BACK domain; that stretch reads CLGICEFGEQ…PRPCVQQLLA (103 aa). Kelch repeat units follow at residues 280–327, 328–378, 379–423, 425–472, 474–514, and 515–564; these read EEDE…ALNS, DVYV…ALNG, EIYA…GCQG, LYLV…ALNG, LYLI…PLGD, and LLYV…TIFL.

The chain is Kelch-like protein 30 (Klhl30) from Mus musculus (Mouse).